Reading from the N-terminus, the 192-residue chain is C-X-C chemokine receptor type 4 (192 aa).

Sulfotyrosine is present on Tyr-1. The interval 1 to 11 is important for chemokine binding and signaling; the sequence is YTEDDLGSGDY. Over 1–28 the chain is Extracellular; sequence YTEDDLGSGDYDSMKEPCFREENAHFNR. The O-linked (Xyl...) (chondroitin sulfate) serine glycan is linked to Ser-8. Tyr-11 is subject to Sulfotyrosine. The helical transmembrane segment at 29-53 threads the bilayer; sequence IFLPTVYSIIFLTGIVGNGLVILVM. The Cytoplasmic segment spans residues 54-67; the sequence is GYQKKLRSMTDKYR. Residues 68–89 traverse the membrane as a helical segment; sequence LHLSVADLLFVLTLPFWAVDAV. Residues 84–87 form a chemokine binding region; sequence WAVD. The Extracellular portion of the chain corresponds to 90-100; the sequence is ANWYFGQFLCK. Residues Cys-99 and Cys-176 are joined by a disulfide bond. Residues 101-120 traverse the membrane as a helical segment; sequence AVHVIYTVNLYSSVLILAFI. A chemokine binding region spans residues 103-107; sequence HVIYT. Residues 121 to 144 lie on the Cytoplasmic side of the membrane; sequence SLDRYLAIVHATNSQRPRKLLAEK. Residues 123–125 carry the Important for signaling motif; the sequence is DRY. Residues 125-137 are involved in dimerization; when bound to chemokine; sequence YLAIVHATNSQRP. The helical transmembrane segment at 145-164 threads the bilayer; the sequence is VVYVGVWLPAVLLTIPDLIF. The Extracellular segment spans residues 165-185; that stretch reads ADIKEADERYICDRFYPSDLW. Positions 176–180 are chemokine binding, important for signaling; the sequence is CDRFY. Residues 186-192 traverse the membrane as a helical segment; the sequence is LVVFQFQ.

This sequence belongs to the G-protein coupled receptor 1 family. In terms of assembly, monomer. Can form homodimers. Interacts with CD164. Interacts with ARRB2; the interaction is dependent on the C-terminal phosphorylation of CXCR4 and allows activation of MAPK1 and MAPK3. Interacts with ARR3; the interaction is dependent on the C-terminal phosphorylation of CXCR4 and modulates calcium mobilization. Interacts with RNF113A; the interaction, enhanced by CXCL12, promotes CXCR4 ubiquitination and subsequent degradation. Interacts (via the cytoplasmic C-terminal) with ITCH (via the WW domains I and II); the interaction, enhanced by CXCL12, promotes CXCR4 ubiquitination and leads to its degradation. Interacts with extracellular ubiquitin. Interacts with DBN1; this interaction is enhanced by antigenic stimulation. Following LPS binding, may form a complex with GDF5, HSP90AA1 and HSPA8. In terms of processing, phosphorylated on agonist stimulation. Rapidly phosphorylated on serine and threonine residues in the C-terminal. Post-translationally, ubiquitinated after ligand binding, leading to its degradation. Ubiquitinated by ITCH at the cell membrane on agonist stimulation. The ubiquitin-dependent mechanism, endosomal sorting complex required for transport (ESCRT), then targets CXCR4 for lysosomal degradation. This process is dependent also on prior Ser-/Thr-phosphorylation in the C-terminal of CXCR4. Also binding of ARRB1 to STAM negatively regulates CXCR4 sorting to lysosomes though modulating ubiquitination of SFR5S. Sulfation is required for efficient binding of CXCL12/SDF-1alpha and promotes its dimerization. In terms of processing, O- and N-glycosylated. N-glycosylation can mask coreceptor function. The O-glycosylation chondroitin sulfate attachment does not affect interaction with CXCL12/SDF-1alpha nor its coreceptor activity.

The protein resides in the cell membrane. Its subcellular location is the cell junction. It localises to the early endosome. It is found in the late endosome. The protein localises to the lysosome. Receptor for the C-X-C chemokine CXCL12/SDF-1 that transduces a signal by increasing intracellular calcium ion levels and enhancing MAPK1/MAPK3 activation. Involved in the AKT signaling cascade. Plays a role in regulation of cell migration, e.g. during wound healing. Acts as a receptor for extracellular ubiquitin; leading to enhanced intracellular calcium ions and reduced cellular cAMP levels. Binds bacterial lipopolysaccharide (LPS) et mediates LPS-induced inflammatory response, including TNF secretion by monocytes. Involved in hematopoiesis and in cardiac ventricular septum formation. Also plays an essential role in vascularization of the gastrointestinal tract, probably by regulating vascular branching and/or remodeling processes in endothelial cells. Involved in cerebellar development. In the CNS, could mediate hippocampal-neuron survival. The chain is C-X-C chemokine receptor type 4 (CXCR4) from Ovis aries (Sheep).